We begin with the raw amino-acid sequence, 1059 residues long: Isoleucine--tRNA ligase (1059 aa).

Residues 47–57 carry the 'HIGH' region motif; it reads PYTSGQMHLGT. A 'KMSKS' region motif is present at residues 606–610; sequence KMSKS. Lys609 contacts ATP.

It belongs to the class-I aminoacyl-tRNA synthetase family. IleS type 2 subfamily. Monomer. The cofactor is Zn(2+).

It localises to the cytoplasm. It catalyses the reaction tRNA(Ile) + L-isoleucine + ATP = L-isoleucyl-tRNA(Ile) + AMP + diphosphate. Catalyzes the attachment of isoleucine to tRNA(Ile). As IleRS can inadvertently accommodate and process structurally similar amino acids such as valine, to avoid such errors it has two additional distinct tRNA(Ile)-dependent editing activities. One activity is designated as 'pretransfer' editing and involves the hydrolysis of activated Val-AMP. The other activity is designated 'posttransfer' editing and involves deacylation of mischarged Val-tRNA(Ile). This is Isoleucine--tRNA ligase from Haloquadratum walsbyi (strain DSM 16790 / HBSQ001).